Here is a 298-residue protein sequence, read N- to C-terminus: tRNA dimethylallyltransferase 2 (298 aa).

10 to 17 (GPTASGKT) provides a ligand contact to ATP. Position 12–17 (12–17 (TASGKT)) interacts with substrate. The tract at residues 35 to 38 (DSRQ) is interaction with substrate tRNA.

It belongs to the IPP transferase family. In terms of assembly, monomer. Mg(2+) serves as cofactor.

It catalyses the reaction adenosine(37) in tRNA + dimethylallyl diphosphate = N(6)-dimethylallyladenosine(37) in tRNA + diphosphate. Catalyzes the transfer of a dimethylallyl group onto the adenine at position 37 in tRNAs that read codons beginning with uridine, leading to the formation of N6-(dimethylallyl)adenosine (i(6)A). The protein is tRNA dimethylallyltransferase 2 of Syntrophotalea carbinolica (strain DSM 2380 / NBRC 103641 / GraBd1) (Pelobacter carbinolicus).